The chain runs to 173 residues: Ribosome maturation factor RimM (173 aa).

The 75-residue stretch at 95–169 folds into the PRC barrel domain; sequence EGSYYFKDIL…RIEVTLLEGL (75 aa).

Belongs to the RimM family. As to quaternary structure, binds ribosomal protein uS19.

Its subcellular location is the cytoplasm. An accessory protein needed during the final step in the assembly of 30S ribosomal subunit, possibly for assembly of the head region. Essential for efficient processing of 16S rRNA. May be needed both before and after RbfA during the maturation of 16S rRNA. It has affinity for free ribosomal 30S subunits but not for 70S ribosomes. The chain is Ribosome maturation factor RimM from Lactobacillus gasseri (strain ATCC 33323 / DSM 20243 / BCRC 14619 / CIP 102991 / JCM 1131 / KCTC 3163 / NCIMB 11718 / NCTC 13722 / AM63).